Reading from the N-terminus, the 533-residue chain is Probable protein kinase UbiB (533 aa).

A helical membrane pass occupies residues 24–44; it reads LILELPMLPWWLRLLGATLPW. The Protein kinase domain occupies 126 to 494; the sequence is RFEREPLASA…WKGSRHDWLG (369 aa). ATP-binding positions include 132-140 and Lys154; that span reads LASASVAQV. Residue Asp289 is the Proton acceptor of the active site. Residues 510-530 form a helical membrane-spanning segment; sequence LGQQLEAWPAWVMLAGGVFLI.

This sequence belongs to the ABC1 family. UbiB subfamily.

Its subcellular location is the cell inner membrane. The protein operates within cofactor biosynthesis; ubiquinone biosynthesis [regulation]. Its function is as follows. Is probably a protein kinase regulator of UbiI activity which is involved in aerobic coenzyme Q (ubiquinone) biosynthesis. In Pseudomonas aeruginosa (strain ATCC 15692 / DSM 22644 / CIP 104116 / JCM 14847 / LMG 12228 / 1C / PRS 101 / PAO1), this protein is Probable protein kinase UbiB.